The sequence spans 326 residues: tRNA(Ile)-lysidine synthase (326 aa).

An ATP-binding site is contributed by serine 33 to serine 38.

This sequence belongs to the tRNA(Ile)-lysidine synthase family.

It is found in the cytoplasm. The catalysed reaction is cytidine(34) in tRNA(Ile2) + L-lysine + ATP = lysidine(34) in tRNA(Ile2) + AMP + diphosphate + H(+). In terms of biological role, ligates lysine onto the cytidine present at position 34 of the AUA codon-specific tRNA(Ile) that contains the anticodon CAU, in an ATP-dependent manner. Cytidine is converted to lysidine, thus changing the amino acid specificity of the tRNA from methionine to isoleucine. This Novosphingobium aromaticivorans (strain ATCC 700278 / DSM 12444 / CCUG 56034 / CIP 105152 / NBRC 16084 / F199) protein is tRNA(Ile)-lysidine synthase.